The following is a 299-amino-acid chain: MTEHKSGFVSIIGRPNVGKSTFVNRVIGHKIAIMSDKAQTTRNKIQGVMTRDDAQIIFIDTPGIHKPKHKLGDYMMRVAKNTLSEIDAIMFMVNVNEDIGRGDEYIMEMLKNVKTPIFLVLNKIDLVHPDTLMPKIEQYQSYMDFTDIIPISALEGLNVDHFIDVLKSFLPEGPKYYPDNQISDHPEQFVVSEIIREKILHLTSEEIPHAIGVNVDRMIKEDEDRVRIETTIYVERDSQKGIVIGKGGKKLKEVGKRARRDIEMLLGSKVYLELWVKVQRDWRNKVNFIRQIGYVEDQD.

Positions 5–172 (KSGFVSIIGR…IDVLKSFLPE (168 aa)) constitute an Era-type G domain. The G1 stretch occupies residues 13 to 20 (GRPNVGKS). 13-20 (GRPNVGKS) serves as a coordination point for GTP. The interval 39–43 (QTTRN) is G2. Residues 60–63 (DTPG) are G3. GTP is bound by residues 60 to 64 (DTPGI) and 122 to 125 (NKID). Residues 122–125 (NKID) are G4. Positions 151–153 (ISA) are G5. The KH type-2 domain maps to 203-280 (TSEEIPHAIG…YLELWVKVQR (78 aa)).

It belongs to the TRAFAC class TrmE-Era-EngA-EngB-Septin-like GTPase superfamily. Era GTPase family. In terms of assembly, monomer.

The protein resides in the cytoplasm. It localises to the cell membrane. Functionally, an essential GTPase that binds both GDP and GTP, with rapid nucleotide exchange. Plays a role in 16S rRNA processing and 30S ribosomal subunit biogenesis and possibly also in cell cycle regulation and energy metabolism. This Staphylococcus epidermidis (strain ATCC 35984 / DSM 28319 / BCRC 17069 / CCUG 31568 / BM 3577 / RP62A) protein is GTPase Era.